A 669-amino-acid chain; its full sequence is Hypoxia-inducible factor 3-alpha (669 aa).

Residues 1–27 are disordered; the sequence is MALGLQRARSTTELRKEKSRDAARSRR. A compositionally biased stretch (basic and acidic residues) spans 10–27; the sequence is STTELRKEKSRDAARSRR. The 54-residue stretch at 14–67 folds into the bHLH domain; it reads LRKEKSRDAARSRRSQETEVLYQLAHTLPFARGVSAHLDKASIMRLTISYLRMH. Residues 77-100 are nuclear localization signal; sequence QVGAGGEPLDACYLKALEGFVMVL. PAS domains follow at residues 82–154 and 227–297; these read GEPL…LSRR and PHPG…LSKG. A nuclear export signal region spans residues 230–274; sequence GSLEPPLGRGAFLSRHSLDMKFTYCDDRIAEVAGYSPDDLIGCSA. Positions 354–389 are disordered; it reads EQTEQHSRRPIQRGAPSQKDTPNPGDSLDTPGPRIL. The LRRLL motif lies at 414–418; sequence LRRLL. Positions 430–444 are enriched in polar residues; that stretch reads TPSTPLATRHPQSPL. Residues 430–451 are disordered; that stretch reads TPSTPLATRHPQSPLSADLPDE. An ODD region spans residues 452–581; it reads LPVGTENVHR…TLAQSSEDED (130 aa). The tract at residues 454–506 is NTAD; that stretch reads VGTENVHRLFTSGKDTEAVETDLDIAQDADALDLEMLAPYISMDDDFQLNASE. K467 is covalently cross-linked (Glycyl lysine isopeptide (Lys-Gly) (interchain with G-Cter in ubiquitin)). Residues 490 to 497 carry the LAPYISMD motif; the sequence is LAPYISMD. The residue at position 492 (P492) is a 4-hydroxyproline. Disordered regions lie at residues 523-600 and 619-669; these read RARS…SPEH and APGS…AQAD. 2 stretches are compositionally biased toward low complexity: residues 530–541 and 550–564; these read LSPPALEPSLLP and SCSS…ASSP. A Glycyl lysine isopeptide (Lys-Gly) (interchain with G-Cter in ubiquitin) cross-link involves residue K570. Over residues 629–646 the composition is skewed to low complexity; it reads PLLNLNEPLGLGPSLLSP.

In terms of assembly, isoform 2 interacts (via ODD domain) with VHL (via beta domain). Isoform 4 interacts with HIF1A; the interaction inhibits the binding of HIF1A to hypoxia-responsive element (HRE) and HIF1A/ARNT-dependent transcriptional activation. Isoform 4 interacts with ARNT; the interaction occurs in a HIF1A- and DNA-binding-independent manner and does not induce HIF1A/ARNT-dependent transcriptional activation. Isoform 4 interacts with EPAS1. Interacts with BAD, BCL2L2 and MCL1. In normoxia, hydroxylated on Pro-492 in the oxygen-dependent degradation domain (ODD) by prolyl hydroxylase(s) (PHD). The hydroxylated proline promotes interaction with VHL, initiating rapid ubiquitination and subsequent proteasomal degradation. In terms of processing, ubiquitinated; ubiquitination occurs in a VHL- and oxygen-dependent pathway and subsequently targeted for proteasomal degradation. In terms of tissue distribution, expressed in vascular cells (at protein level). Expressed in kidney. Expressed in lung epithelial cells. Expressed in endothelial cells (venous and arterial cells from umbilical cord and aortic endothelial cells) and in vascular smooth muscle cells (aorta). Strongly expressed in the heart, placenta, and skeletal muscle, whereas a weak expression profile was found in the lung, liver, and kidney. Expressed weakly in cell renal cell carcinoma (CC-RCC) compared to normal renal cells. Expression is down-regulated in numerous kidney tumor cells compared to non tumor kidney tissues. Isoform 2 is expressed in heart, placenta, lung, liver, skeletal muscle and pancreas and in numerous cancer cell lines. Isoform 3 and isoform 4 are weakly expressed in heart, placenta, lung, liver, skeletal muscle and pancreas. Isoform 4 is expressed in fetal tissues, such as heart, brain, thymus, lung, liver, skeletal kidney and spleen. Isoform 3 is weakly expressed in fetal tissues, such as liver and kidney.

It localises to the nucleus. The protein localises to the cytoplasm. Its subcellular location is the nucleus speckle. It is found in the mitochondrion. In terms of biological role, acts as a transcriptional regulator in adaptive response to low oxygen tension. Acts as a regulator of hypoxia-inducible gene expression. Functions as an inhibitor of angiogenesis in hypoxic cells of the cornea. Plays a role in the development of the cardiorespiratory system. May also be involved in apoptosis. Its function is as follows. Attenuates the ability of transcription factor HIF1A to bind to hypoxia-responsive elements (HRE) located within the enhancer/promoter of hypoxia-inducible target genes and hence inhibits HRE-driven transcriptional activation. Also inhibits hypoxia-inducible ARNT-mediated gene expression. Functionally, attenuates the ability of transcription factor HIF1A to bind to hypoxia-responsive elements (HRE) located within the enhancer/promoter of hypoxia-inducible target genes and hence inhibits HRE-driven transcriptional activation. Attenuates the ability of transcription factor HIF1A and EPAS1/HIF2A to bind to hypoxia-responsive elements (HRE) located within the enhancer/promoter of hypoxia-inducible target genes and hence inhibits HRE-driven transcriptional activation. May act as a tumor suppressor and inhibits malignant cell transformation. This Homo sapiens (Human) protein is Hypoxia-inducible factor 3-alpha.